The primary structure comprises 457 residues: PDZ and LIM domain protein 7 (457 aa).

Positions 1-85 (MDSFKVVLEG…RLSLGLSRAQ (85 aa)) constitute a PDZ domain. At S78 the chain carries Phosphoserine. 3 disordered regions span residues 82-142 (SRAQ…LVPD), 176-226 (TEFM…PWAV), and 239-258 (TSTV…LQSR). Residue R103 is modified to Asymmetric dimethylarginine. At S111 the chain carries Phosphoserine. Pro residues predominate over residues 208–221 (EPWPGPTAPSPTSR). S247 bears the Phosphoserine mark. LIM zinc-binding domains are found at residues 280–338 (PVCH…VRYA), 339–398 (PSCA…MFGT), and 399–457 (KCHG…FSHV).

In terms of assembly, binds via its LIM zinc-binding 3 domain (LIM 3) to endocytic codes of INSR, but not with those of IGF1R, LDLR, TFRC, or EGFR. Interacts with various PKC isoforms through the LIM zinc-binding domains. Binds to RET in a phosphorylation-independent manner via its LIM zinc-binding domain 2 (LIM 2). Probably part of a complex with SHC and the RET dimer. Interacts with TPM2. Interacts with TBX4 and TBX5. Isoform 1 and isoform 2 are expressed ubiquitously, however, isoform 2 predominates in skeletal muscle, isoform 1 is more abundant in lung, spleen, leukocytes and fetal liver.

Its subcellular location is the cytoplasm. It localises to the cytoskeleton. Its function is as follows. May function as a scaffold on which the coordinated assembly of proteins can occur. May play a role as an adapter that, via its PDZ domain, localizes LIM-binding proteins to actin filaments of both skeletal muscle and nonmuscle tissues. Involved in both of the two fundamental mechanisms of bone formation, direct bone formation (e.g. embryonic flat bones mandible and cranium), and endochondral bone formation (e.g. embryonic long bone development). Plays a role during fracture repair. Involved in BMP6 signaling pathway. In Homo sapiens (Human), this protein is PDZ and LIM domain protein 7 (PDLIM7).